The primary structure comprises 265 residues: uncharacterized protein (265 aa).

The disordered stretch occupies residues 122–145 (THYRDNGQTPPRDTRPHGGISLGG).

This is an uncharacterized protein from Zymomonas mobilis subsp. mobilis (strain ATCC 31821 / ZM4 / CP4).